The sequence spans 511 residues: Portal protein (511 aa).

Belongs to the Tevenvirinae portal protein family. As to quaternary structure, homododecamer. Interacts with the large terminase subunit. Interacts with the major capsid protein. Interacts with the capsid vertex protein.

The protein localises to the virion. In terms of biological role, forms the portal vertex of the capsid. This portal plays critical roles in head assembly, genome packaging, neck/tail attachment, and genome ejection. The portal protein multimerizes as a single ring-shaped homododecamer arranged around a central channel. Binds to the terminase subunits to form the packaging machine. The polypeptide is Portal protein (Vibrio phage KVP40 (isolate Vibrio parahaemolyticus/Japan/Matsuzaki/1991) (KVP40)).